The following is a 352-amino-acid chain: Glycerol-1-phosphate dehydrogenase [NAD(P)+] (352 aa).

NAD(+) is bound by residues 98–102 (GKPID) and 120–123 (TAAS). Substrate is bound at residue aspartate 125. Serine 129 is a binding site for NAD(+). Aspartate 172 is a substrate binding site. 2 residues coordinate Zn(2+): aspartate 172 and histidine 252. Residue histidine 256 coordinates substrate. Histidine 268 lines the Zn(2+) pocket.

Belongs to the glycerol-1-phosphate dehydrogenase family. Requires Zn(2+) as cofactor.

It localises to the cytoplasm. The enzyme catalyses sn-glycerol 1-phosphate + NAD(+) = dihydroxyacetone phosphate + NADH + H(+). It catalyses the reaction sn-glycerol 1-phosphate + NADP(+) = dihydroxyacetone phosphate + NADPH + H(+). Its pathway is membrane lipid metabolism; glycerophospholipid metabolism. Its function is as follows. Catalyzes the NAD(P)H-dependent reduction of dihydroxyacetonephosphate (DHAP or glycerone phosphate) to glycerol 1-phosphate (G1P). The G1P thus generated is used as the glycerophosphate backbone of phospholipids in the cellular membranes of Archaea. The protein is Glycerol-1-phosphate dehydrogenase [NAD(P)+] of Natronomonas pharaonis (strain ATCC 35678 / DSM 2160 / CIP 103997 / JCM 8858 / NBRC 14720 / NCIMB 2260 / Gabara) (Halobacterium pharaonis).